Here is a 696-residue protein sequence, read N- to C-terminus: Polyribonucleotide nucleotidyltransferase (696 aa).

2 residues coordinate Mg(2+): aspartate 489 and aspartate 495. Residues 556–615 enclose the KH domain; it reads PQYVTMKINPEKIRDVIGKGGVVIREITEATNCAIDISDDGTIKIAAHTTEEGEAAKRRI. In terms of domain architecture, S1 motif spans 625–693; that stretch reads GKVYEGTVVK…RQGRVRLSMK (69 aa).

It belongs to the polyribonucleotide nucleotidyltransferase family. As to quaternary structure, component of the RNA degradosome, which is a multiprotein complex involved in RNA processing and mRNA degradation. Mg(2+) is required as a cofactor.

It localises to the cytoplasm. The enzyme catalyses RNA(n+1) + phosphate = RNA(n) + a ribonucleoside 5'-diphosphate. In terms of biological role, involved in mRNA degradation. Catalyzes the phosphorolysis of single-stranded polyribonucleotides processively in the 3'- to 5'-direction. The polypeptide is Polyribonucleotide nucleotidyltransferase (Coxiella burnetii (strain CbuG_Q212) (Coxiella burnetii (strain Q212))).